Here is a 183-residue protein sequence, read N- to C-terminus: Inosine triphosphate pyrophosphatase (183 aa).

8–13 (TGNKNK) contacts ITP. E36 is a Mg(2+) binding site. ITP-binding positions include K48, 64–65 (DT), K81, 140–143 (FGWD), K161, and 166–167 (HR).

This sequence belongs to the HAM1 NTPase family. Homodimer. Mg(2+) serves as cofactor. Requires Mn(2+) as cofactor.

Its subcellular location is the cytoplasm. It localises to the nucleus. It carries out the reaction ITP + H2O = IMP + diphosphate + H(+). The catalysed reaction is dITP + H2O = dIMP + diphosphate + H(+). It catalyses the reaction XTP + H2O = XMP + diphosphate + H(+). Its function is as follows. Pyrophosphatase that hydrolyzes non-canonical purine nucleotides such as inosine triphosphate (ITP), deoxyinosine triphosphate (dITP) or xanthosine 5'-triphosphate (XTP) to their respective monophosphate derivatives. The enzyme does not distinguish between the deoxy- and ribose forms. Probably excludes non-canonical purines from RNA and DNA precursor pools, thus preventing their incorporation into RNA and DNA and avoiding chromosomal lesions. The sequence is that of Inosine triphosphate pyrophosphatase from Ajellomyces capsulatus (strain G186AR / H82 / ATCC MYA-2454 / RMSCC 2432) (Darling's disease fungus).